Here is an 887-residue protein sequence, read N- to C-terminus: Exocyst complex component SEC3A (887 aa).

2 coiled-coil regions span residues 221-248 and 281-301; these read IGEAEAFSERLKRELQALEAANVHAILE and LRHMREDIESIETRNNKLEMQ. Residues 542–581 are disordered; sequence GAGNDKKSQSNNDDGNDDDDLGIMDIDETDKKPGKNSPDL. Over residues 555–569 the composition is skewed to acidic residues; that stretch reads DGNDDDDLGIMDIDE.

This sequence belongs to the SEC3 family. The exocyst complex is composed of SEC3, SEC5, SEC6, SEC8, SEC10, EXO70A1 and EXO84B. Interacts with EXO70A1, SEC5A and ICR1, but not with ICR2. Binds to EXO70H1. Binds directly to B1L. As to expression, widely expressed. Preferentially expressed in tissues containing dividing and expanding cells, such as the shoot apical meristem, root tip, lateral root primordia and developing embryos.

The protein resides in the cytoplasm. Its subcellular location is the cytosol. It localises to the cell membrane. The protein localises to the cytoskeleton. It is found in the phragmoplast. The protein resides in the secreted. Its subcellular location is the extracellular exosome. Its function is as follows. Component of the exocyst complex involved in the docking of exocytic vesicles with fusion sites on the plasma membrane during regulated or polarized secretion. Involved in polarized cell growth and organ morphogenesis. During cytokinesis, involved in cell plate initiation, cell plate maturation and formation of new primary cell wall. During cytokinesis, involved in cell plate initiation, cell plate maturation and formation of new primary cell wall. The polypeptide is Exocyst complex component SEC3A (Arabidopsis thaliana (Mouse-ear cress)).